We begin with the raw amino-acid sequence, 189 residues long: Crossover junction endodeoxyribonuclease RuvC (189 aa).

Residues D9, E70, and D143 contribute to the active site. Mg(2+)-binding residues include D9, E70, and D143. The span at 162–178 shows a compositional bias: low complexity; it reads MGAASGNSSLTPAQKAW. The interval 162–189 is disordered; sequence MGAASGNSSLTPAQKAWADAEAKARRKR. Positions 179–189 are enriched in basic and acidic residues; that stretch reads ADAEAKARRKR.

It belongs to the RuvC family. In terms of assembly, homodimer which binds Holliday junction (HJ) DNA. The HJ becomes 2-fold symmetrical on binding to RuvC with unstacked arms; it has a different conformation from HJ DNA in complex with RuvA. In the full resolvosome a probable DNA-RuvA(4)-RuvB(12)-RuvC(2) complex forms which resolves the HJ. Requires Mg(2+) as cofactor.

The protein resides in the cytoplasm. The catalysed reaction is Endonucleolytic cleavage at a junction such as a reciprocal single-stranded crossover between two homologous DNA duplexes (Holliday junction).. The RuvA-RuvB-RuvC complex processes Holliday junction (HJ) DNA during genetic recombination and DNA repair. Endonuclease that resolves HJ intermediates. Cleaves cruciform DNA by making single-stranded nicks across the HJ at symmetrical positions within the homologous arms, yielding a 5'-phosphate and a 3'-hydroxyl group; requires a central core of homology in the junction. The consensus cleavage sequence is 5'-(A/T)TT(C/G)-3'. Cleavage occurs on the 3'-side of the TT dinucleotide at the point of strand exchange. HJ branch migration catalyzed by RuvA-RuvB allows RuvC to scan DNA until it finds its consensus sequence, where it cleaves and resolves the cruciform DNA. The chain is Crossover junction endodeoxyribonuclease RuvC from Paenarthrobacter aurescens (strain TC1).